Reading from the N-terminus, the 291-residue chain is MKVGVEAIRELRQITGAGLGDCKEALETCSGDMEKAKVYLREKGLSKAYKKSHRDAADGLVAVRVEGDKGAILKLGSETDFVARNEKFRSLAAELVSSLLKHGAEDLSSFSASPYDGGSGVSVADEVVNAAAVLGEHVVLSGIGFLELGGPGVIGSYIHGAVGEGIGRAGALVALEATTAKTEALLEFARQLAMHIVAAKPESVSVETLSNDLVEREREIVAKQVEALGKPESVASKIVDGRMQKFFEDMVLLEQTFIMDGSTKIRDLLHNKGQDLGCEVRIVAYRLFSVG.

The segment at 79–82 is involved in Mg(2+) ion dislocation from EF-Tu; sequence TDFV.

This sequence belongs to the EF-Ts family.

It localises to the cytoplasm. Functionally, associates with the EF-Tu.GDP complex and induces the exchange of GDP to GTP. It remains bound to the aminoacyl-tRNA.EF-Tu.GTP complex up to the GTP hydrolysis stage on the ribosome. In Anaplasma marginale (strain St. Maries), this protein is Elongation factor Ts.